The chain runs to 318 residues: Basic leucine zipper (bZIP) transcription factor atfB (318 aa).

The segment at 114 to 157 (FNSSPPEYAPPKHRSSLSEQSQTDGYGVSTRRRKASAIDQCEQQ) is disordered. The tract at residues 160–199 (REKREKFLERNRLAASKCRQKKKEHTKLLETRFREVSNKK) is basic motif. Residues 160 to 223 (REKREKFLER…LNLKNEMLRH (64 aa)) form the bZIP domain. The interval 202–216 (LESEIEHLRSEVLNL) is leucine-zipper. Residues 275–301 (DGPMQLPSEMGSPLDQRRDSEQSIMTE) form a disordered region.

It belongs to the bZIP family. ATF subfamily.

It localises to the nucleus. Transcription factor that acts as a key player in the regulatory circuit that integrates secondary metabolism and cellular response to oxidative stress. Regulates the genes involved in development and stress response through direct binding to their promoters. Particularly involved in the resistance to oxidative stress in asexual conidiospores. The sequence is that of Basic leucine zipper (bZIP) transcription factor atfB from Aspergillus oryzae (strain ATCC 42149 / RIB 40) (Yellow koji mold).